An 897-amino-acid polypeptide reads, in one-letter code: Alpha-actinin-2 (897 aa).

The actin-binding stretch occupies residues 1–257 (MNSMNQIETN…IMTYVSCFYH (257 aa)). 2 Calponin-homology (CH) domains span residues 41 to 145 (KQQR…LRFA) and 154 to 260 (TSAK…HAFA). 4 Spectrin repeats span residues 284-394 (RLME…WLLN), 404-509 (HLAE…ALER), 519-630 (QLHL…SLQE), and 640-743 (RLRR…EVET). EF-hand domains lie at 756-791 (EQMN…MGYD) and 792-827 (LGEA…ETAD). Ca(2+) contacts are provided by Asp769, Asn773, Asp780, Asp805, Asn807, and Thr811.

The protein belongs to the alpha-actinin family. In terms of assembly, homodimer; antiparallel. In terms of processing, ubiquitinated by FBXL22, leading to proteasomal degradation.

Its subcellular location is the cytoplasm. The protein resides in the myofibril. It is found in the sarcomere. It localises to the z line. In terms of biological role, F-actin cross-linking protein which is thought to anchor actin to a variety of intracellular structures. This is a bundling protein. The polypeptide is Alpha-actinin-2 (ACTN2) (Gallus gallus (Chicken)).